The sequence spans 391 residues: Probable methanogen homoaconitase large subunit (391 aa).

Cysteine 275, cysteine 333, and cysteine 336 together coordinate [4Fe-4S] cluster.

It belongs to the aconitase/IPM isomerase family. LeuC type 2 subfamily. In terms of assembly, heterotetramer of 2 HacA and 2 HacB proteins.

It catalyses the reaction (2R)-homocitrate = (2R,3S)-homoisocitrate. The enzyme catalyses (2R)-homocitrate = cis-homoaconitate + H2O. The catalysed reaction is (2R,3S)-homoisocitrate = cis-homoaconitate + H2O. It carries out the reaction cis-(homo)2aconitate + H2O = (2R,3S)-iso(homo)2citrate. It catalyses the reaction cis-(homo)3aconitate + H2O = (2R,3S)-iso(homo)3citrate. It participates in organic acid metabolism; 2-oxosuberate biosynthesis. In terms of biological role, component of a hydro-lyase with broad substrate specificity for cis-unsaturated tricarboxylic acids. Catalyzes both the reversible dehydration of (R)-homocitrate ((R)-2-hydroxybutane-1,2,4-tricarboxylate) to produce cis-homoaconitate ((Z)-but-1-ene-1,2,4-tricarboxylate), and its hydration to homoisocitrate ((1R,2S)-1-hydroxybutane-1,2,4-tricarboxylate). Is also able to hydrate the analogous longer chain substrates cis-homo(2)-aconitate, cis-homo(3)-aconitate. These reactions are part of the biosynthesis pathway of coenzyme B. In Methanosarcina mazei (strain ATCC BAA-159 / DSM 3647 / Goe1 / Go1 / JCM 11833 / OCM 88) (Methanosarcina frisia), this protein is Probable methanogen homoaconitase large subunit (hacA).